The chain runs to 346 residues: Tetraacyldisaccharide 4'-kinase (346 aa).

ATP is bound at residue 62–69 (TAGGTGKT).

Belongs to the LpxK family.

It catalyses the reaction a lipid A disaccharide + ATP = a lipid IVA + ADP + H(+). It functions in the pathway glycolipid biosynthesis; lipid IV(A) biosynthesis; lipid IV(A) from (3R)-3-hydroxytetradecanoyl-[acyl-carrier-protein] and UDP-N-acetyl-alpha-D-glucosamine: step 6/6. Its function is as follows. Transfers the gamma-phosphate of ATP to the 4'-position of a tetraacyldisaccharide 1-phosphate intermediate (termed DS-1-P) to form tetraacyldisaccharide 1,4'-bis-phosphate (lipid IVA). The polypeptide is Tetraacyldisaccharide 4'-kinase (Xanthomonas oryzae pv. oryzae (strain MAFF 311018)).